Consider the following 276-residue polypeptide: 3beta-hydroxysteroid dehydrogenase (276 aa).

NADP(+) is bound by residues 70–71 (DV), asparagine 97, tyrosine 162, and lysine 166. Tyrosine 162 serves as the catalytic Proton acceptor.

The protein belongs to the short-chain dehydrogenases/reductases (SDR) family.

The catalysed reaction is 3-oxo-5beta-cholan-24-oate + NADPH + H(+) = isolithocholate + NADP(+). The enzyme catalyses 12alpha-hydroxy-3-oxo-5beta-cholan-24-oate + NADPH + H(+) = isodeoxycholate + NADP(+). It catalyses the reaction 12alpha-hydroxy-3-oxo-5beta-cholan-24-oate + NADH + H(+) = isodeoxycholate + NAD(+). It carries out the reaction 7alpha,12alpha-dihydroxy-3-oxo-5beta-cholan-24-oate + NADPH + H(+) = isocholate + NADP(+). The catalysed reaction is 3-oxochenodeoxycholate + NADPH + H(+) = isochenodeoxycholate + NADP(+). Involved in the modification of secondary bile acids into iso-bile acids (3beta-bile acids) via epimerization of the 3-OH group through a 3-oxo-intermediate. Catalyzes the reduction of 12-alpha-hydroxy-3-oxo-5-beta-cholan-24-oate (3-oxo-DCA) and 3-oxo-5-beta-cholan-24-oate (3-oxo-LCA) to yield isodeoxycholate (isoDCA) and isolithocholate (isoLCA), respectively. Is also able to catalyze the reduction of 3-dehydrocholate (3-oxo-CA or 7alpha,12alpha-dihydroxy-3-oxo-5beta-cholan-24-oate) and 7-alpha-hydroxy-3-oxo-5-beta-cholan-24-oate (3-oxo-CDCA), into isocholate (isoCA) and isochenodeoxycholate (isoCDCA), respectively. Accepts both NADPH and NADH as cosubstrates. The conversion of the abundant bile acid deoxycholate (DCA) into isoDCA by the gut bacterium R.gnavus favors the growth of the keystone commensal genus Bacteroides, since isoDCA is less cytotoxic than its parent compound, DCA; iso-bile acids have thus a potential role in modulating gut community composition. This Mediterraneibacter gnavus (strain ATCC 29149 / DSM 114966 / JCM 6515 / VPI C7-9) (Ruminococcus gnavus) protein is 3beta-hydroxysteroid dehydrogenase.